A 335-amino-acid chain; its full sequence is N-acetyl-gamma-glutamyl-phosphate reductase (335 aa).

The active site involves Cys-155.

The protein belongs to the NAGSA dehydrogenase family. Type 1 subfamily.

The protein resides in the cytoplasm. The catalysed reaction is N-acetyl-L-glutamate 5-semialdehyde + phosphate + NADP(+) = N-acetyl-L-glutamyl 5-phosphate + NADPH + H(+). The protein operates within amino-acid biosynthesis; L-arginine biosynthesis; N(2)-acetyl-L-ornithine from L-glutamate: step 3/4. In terms of biological role, catalyzes the NADPH-dependent reduction of N-acetyl-5-glutamyl phosphate to yield N-acetyl-L-glutamate 5-semialdehyde. This Pasteurella multocida (strain Pm70) protein is N-acetyl-gamma-glutamyl-phosphate reductase.